A 929-amino-acid polypeptide reads, in one-letter code: Collagen alpha-1(XII) chain (929 aa).

In terms of domain architecture, VWFA 1 spans 1 to 49 (DVEIFAVGVKDAVRSELEAIATPPTATHVYTVEDFDAFQRISFELTQSI). 6 consecutive Fibronectin type-III domains span residues 67–156 (PPRD…LEVR), 158–250 (APRN…VGEP), 251–340 (KNLR…LQER), 342–432 (SPRD…ASPD), 434–521 (KIVK…LSPF), and 523–613 (APRS…TLRD). N-linked (GlcNAc...) asparagine glycosylation occurs at Asn-98. O-linked (Xyl...) (chondroitin sulfate) serine glycans are attached at residues Ser-231, Ser-324, and Ser-415. The VWFA 2 domain occupies 633–805 (DIVLLVDGSW…SLLTNIVNDL (173 aa)). One can recognise a Fibronectin type-III 7 domain in the interval 821 to 910 (PPSNLVTSEP…AGTETTLPIP (90 aa)).

Belongs to the fibril-associated collagens with interrupted helices (FACIT) family. As to quaternary structure, trimer of identical chains each containing 190 kDa of non-triple-helical sequences. In terms of processing, the triple-helical tail is stabilized by disulfide bonds at each end. Post-translationally, prolines at the third position of the tripeptide repeating unit (G-X-Y) are hydroxylated in some or all of the chains.

It localises to the secreted. Its subcellular location is the extracellular space. The protein localises to the extracellular matrix. Functionally, type XII collagen interacts with type I collagen-containing fibrils, the COL1 domain could be associated with the surface of the fibrils, and the COL2 and NC3 domains may be localized in the perifibrillar matrix. Could play a developmental role in regeneration. The chain is Collagen alpha-1(XII) chain from Notophthalmus viridescens (Eastern newt).